Consider the following 1043-residue polypeptide: MSFIRKKSMEFLKSFEVPAKNPSEEAQRRWRDAVGTLVKNRRRRFRMVPDLDKRSQAETQRRKIQEKLRVALFVQKAALQFIDAVRKTEHPLPELARQCGFSVSAEELASIVRGHDTKSLRFHNGVDGIARKVAVSLADGVKSDDAGLRAEVYGANQYTEKPPRTFWMFLWDASQDMTLLLLAFCAAVSVAIGLATEGWPSGMYDGVGIMLTILLVVMITAASDYKQSLQFRDLDKEKKKIDVQVTRDGYRQKVSIYDIVVGDIVHLSIGDQVPADGLFIDGYSFVVDESNLSGESEPVHVSTANRFLLGGTKVQDGSARMLVTAVGMRTEWGNLMETLSQGGEDETPLQVKLNGVATIIGKIGLAFAVLTFTVLMARFLLGKAGAPGGLLRWRMVDALAVLNFFAVAVTIIVVAVPEGLPLAVTLSLAFAMKKLMQERALVRHLSACETMGSASCICTDKTGTLTTNHMVVEKIWASGAAQTMSNAKGFDQLTSSMSETFAKVLLEGVFHCSGSEVVRGKDGRHTIMGTPTETAILEFGLAVEKRARIEHTGAGKLKVEPFNSVKKTMAVVIASPSAGGRPRAFLKGASEVVLSRCSLVLDGTGNVEKLTDAKAKRVASAIDAFACEALRTLCLAYQDVDGGGGDIPGEGYTLIAVFGIKDPLRPGVREAVATCHAAGINVRMVTGDNINTAKAIARECGILTDDGIAIEGPEFRNKDPDQMREIIPKIQVMARSLPLDKHTLVTNLRGMFNEVVAVTGDGTNDAPALHEADIGLAMGIAGTEVAKENADVIIMDDNFSTIINVAKWGRSVYINIQKFVQFQLTVNVVALMVNFISASFTGSAPLTIVQLLWVNLIMDTLGALALATEPPNDAMMKRPPVGRGDNFITKVMWRNIVGQSIYQLVVLGVLLLRGKSLLQINGPQADSLLNTFVFNTFVFCQVFNEVNSREMEKINVFSGIFSSWIFSAVVGVTAGFQVIMVELLGTFANTVHLSGKLWLTSVLIGSVGLVIGAILKCIPVESGSDASDRHDGYRPIPTGPSAV.

The Cytoplasmic portion of the chain corresponds to 1–178 (MSFIRKKSME…FLWDASQDMT (178 aa)). 2 helical membrane-spanning segments follow: residues 179 to 199 (LLLL…TEGW) and 202 to 222 (GMYD…ITAA). Residues 223 to 258 (SDYKQSLQFRDLDKEKKKIDVQVTRDGYRQKVSIYD) lie on the Cytoplasmic side of the membrane. The next 2 membrane-spanning stretches (helical) occupy residues 259 to 279 (IVVG…DGLF) and 356 to 376 (VATI…TVLM). Residues 377-395 (ARFLLGKAGAPGGLLRWRM) lie on the Cytoplasmic side of the membrane. A helical membrane pass occupies residues 396 to 416 (VDALAVLNFFAVAVTIIVVAV). The active-site 4-aspartylphosphate intermediate is the Asp-460. Positions 761 and 765 each coordinate Mg(2+). Residues 824–844 (LTVNVVALMVNFISASFTGSA) traverse the membrane as a helical segment. A topological domain (cytoplasmic) is located at residue Pro-845. 2 helical membrane passes run 846-866 (LTIV…ALAL) and 891-911 (VMWR…GVLL). Residues 912–955 (LRGKSLLQINGPQADSLLNTFVFNTFVFCQVFNEVNSREMEKIN) are Cytoplasmic-facing. 2 consecutive transmembrane segments (helical) span residues 956 to 976 (VFSG…TAGF) and 998 to 1018 (WLTS…LKCI). Residues 1019–1043 (PVESGSDASDRHDGYRPIPTGPSAV) are Cytoplasmic-facing. The segment at 1023 to 1043 (GSDASDRHDGYRPIPTGPSAV) is disordered.

It belongs to the cation transport ATPase (P-type) (TC 3.A.3) family. Type IIB subfamily.

The protein resides in the membrane. It carries out the reaction Ca(2+)(in) + ATP + H2O = Ca(2+)(out) + ADP + phosphate + H(+). Its activity is regulated as follows. Activated by calmodulin. Its function is as follows. This magnesium-dependent enzyme catalyzes the hydrolysis of ATP coupled with the translocation of calcium from the cytosol out of the cell, into the endoplasmic reticulum, or into organelles. The polypeptide is Calcium-transporting ATPase 1, plasma membrane-type (Oryza sativa subsp. japonica (Rice)).